A 360-amino-acid polypeptide reads, in one-letter code: Deoxyhypusine hydroxylase (360 aa).

3 HEAT-like PBS-type repeats span residues 56-82 (LKHE…ILQD), 89-115 (VRHE…YRSD), and 213-245 (ERYR…GLQD). Residues His-58, Glu-59, His-91, and Glu-92 each coordinate Fe cation. Residues His-252, Glu-253, His-285, and Glu-286 each contribute to the Fe cation site.

This sequence belongs to the deoxyhypusine hydroxylase family. The cofactor is Fe(2+).

It is found in the cytoplasm. The protein resides in the nucleus. It carries out the reaction [eIF5A protein]-deoxyhypusine + AH2 + O2 = [eIF5A protein]-hypusine + A + H2O. It participates in protein modification; eIF5A hypusination. Functionally, catalyzes the hydroxylation of the N(6)-(4-aminobutyl)-L-lysine intermediate to form hypusine, an essential post-translational modification only found in mature eIF-5A factor. The polypeptide is Deoxyhypusine hydroxylase (Mycosarcoma maydis (Corn smut fungus)).